The following is an 85-amino-acid chain: Small ribosomal subunit protein eS21 (85 aa).

This sequence belongs to the eukaryotic ribosomal protein eS21 family. In terms of assembly, component of the 40S small ribosomal subunit.

Its subcellular location is the cytoplasm. It localises to the cytosol. It is found in the rough endoplasmic reticulum. The chain is Small ribosomal subunit protein eS21 (rps-21) from Pectinaria gouldii (Trumpet worm).